A 56-amino-acid chain; its full sequence is Protein SspF (56 aa).

The protein belongs to the alpha/beta-type SASP family.

Functionally, may play some important role in either sporulation or the dormant spore. This Priestia megaterium (strain ATCC 12872 / QMB1551) (Bacillus megaterium) protein is Protein SspF (sspF).